Reading from the N-terminus, the 460-residue chain is Argininosuccinate lyase (460 aa).

Belongs to the lyase 1 family. Argininosuccinate lyase subfamily.

The protein localises to the cytoplasm. The catalysed reaction is 2-(N(omega)-L-arginino)succinate = fumarate + L-arginine. It participates in amino-acid biosynthesis; L-arginine biosynthesis; L-arginine from L-ornithine and carbamoyl phosphate: step 3/3. The chain is Argininosuccinate lyase from Lawsonia intracellularis (strain PHE/MN1-00).